Consider the following 988-residue polypeptide: Protein argonaute 10 (988 aa).

A compositionally biased stretch (basic and acidic residues) spans 1 to 11; sequence MPIRQMKDSSE. A disordered region spans residues 1 to 103; the sequence is MPIRQMKDSS…PPSQTTSSAV (103 aa). The span at 41–57 shows a compositional bias: low complexity; it reads PVTVTTPATVTQSQASS. Residues 64-73 are compositionally biased toward basic residues; sequence NRSRRRNRGG. The PAZ domain maps to 338–451; that stretch reads PVIEFVAQLL…LPMEACKIVE (114 aa). In terms of domain architecture, Piwi spans 625 to 946; the sequence is LLLAILPDNN…AAFRARFYLE (322 aa).

The protein belongs to the argonaute family. Ago subfamily. Interacts with GATA18/HAN and KNAT1/BP. Interacts with RICE1 and RICE2 that act as cofactors. As to expression, expressed in roots, stems, leaves, developing embryo, siliques, inflorescences, provascular tissue, shoot apical meristem (SAM) and adaxial (upper) sides of lateral organ primordia. Observed in the floral meristem, the adaxial side of sepal primordia, and the provascular tissue.

The protein resides in the cytoplasm. Functionally, involved in RNA-mediated post-transcriptional gene silencing (PTGS). Main component of the RNA-induced silencing complex (RISC) that binds to a short guide RNA such as a microRNA (miRNA) or small interfering RNA (siRNA). RISC uses the mature miRNA or siRNA as a guide for slicer-directed cleavage of homologous mRNAs to repress gene expression. Required for reliable formation of primary and axillary shoot apical meristems. Specifies leaf adaxial identity by repressing the miR165 and miR166 microRNAs in the embryonic shoot apex, in the shoot apical meristem (SAM) and leaf. Represses the microRNA miR398 which targets CCS1 chaperone mRNAs for translational inhibition. Acts as a negative regulator of AGO1 protein level. Like AGO1, is required for stem cell function and organ polarity. Unlike AGO1, is not subjected to small RNA-mediated repression itself. Essential for multiple processes in development. Coregulates, with GATA18/HAN, the shoot apical meristem (SAM) organization. The sequence is that of Protein argonaute 10 from Arabidopsis thaliana (Mouse-ear cress).